Consider the following 1478-residue polypeptide: Adhesion G protein-coupled receptor L2 (1478 aa).

A signal peptide spans 1-25 (MVSSGCRMRSLWFIIIISFLPNTEG). At 26 to 855 (FSRAALPFGL…VHELLLTVIT (830 aa)) the chain is on the extracellular side. Residues 41–130 (SCEGYSIDLR…KYLEVQYECV (90 aa)) enclose the SUEL-type lectin domain. N-linked (GlcNAc...) asparagine glycosylation is present at Asn99. One can recognise an Olfactomedin-like domain in the interval 139–398 (VCPGTLKAIV…ILRYSLEFGP (260 aa)). Cys140 and Cys322 are joined by a disulfide. Asn335 carries an N-linked (GlcNAc...) asparagine glycan. Positions 422 to 458 (VSTTSTTSQKGPMSTTVAGSQEGSKGTKAPPAVSTTK) are disordered. The span at 430–445 (QKGPMSTTVAGSQEGS) shows a compositional bias: polar residues. Asn524, Asn633, Asn735, Asn748, Asn791, Asn796, and Asn817 each carry an N-linked (GlcNAc...) asparagine glycan. The 179-residue stretch at 663–841 (TRVSMPTENI…AILMAHREIA (179 aa)) folds into the GAIN-B domain. Intrachain disulfides connect Cys792-Cys823 and Cys811-Cys825. The GPS stretch occupies residues 792–841 (CSFWNYSERTMMGYWSTQGCKLVDTNKTRTTCACSHLTNFAILMAHREIA). Residues 856 to 876 (WVGIVISLVCLAICIFTFCFF) traverse the membrane as a helical segment. Residues 877–884 (RGLQSDRN) lie on the Cytoplasmic side of the membrane. A helical transmembrane segment spans residues 885-905 (TIHKNLCINLFIAEFIFLIGI). Residues 906-911 (DKTKYM) lie on the Extracellular side of the membrane. The chain crosses the membrane as a helical span at residues 912 to 932 (IACPIFAGLLHFFFLAAFAWM). Residues 933–955 (CLEGVQLYLMLVEVFESEYSRKK) are Cytoplasmic-facing. The helical transmembrane segment at 956–976 (YYYVAGYLFPATVVGVSAAID) threads the bilayer. The Extracellular segment spans residues 977-994 (YKSYGTEKACWLHVDNYF). The chain crosses the membrane as a helical span at residues 995–1015 (IWSFIGPVTFIILLNIIFLVI). The Cytoplasmic segment spans residues 1016–1056 (TLCKMVKHSNTLKPDSSRLENINNYRVCDGYYNTDLPGSWV). The helical transmembrane segment at 1057-1077 (LGAFALLCLLGLTWSFGLLFI) threads the bilayer. The Extracellular portion of the chain corresponds to 1078 to 1081 (NEET). Residues 1082 to 1102 (IVMAYLFTIFNAFQGVFIFIF) traverse the membrane as a helical segment. At 1103 to 1478 (HCALQKKVRK…EGQMQLVTSL (376 aa)) the chain is on the cytoplasmic side. A disordered region spans residues 1378–1419 (AEDHLQSPNRDSLYTSMPNLRDSPYQESSPDMEEDLSPSRRS). The span at 1383-1395 (QSPNRDSLYTSMP) shows a compositional bias: polar residues. A phosphoserine mark is found at Ser1393, Ser1428, and Ser1449.

This sequence belongs to the G-protein coupled receptor 2 family. Adhesion G-protein coupled receptor (ADGR) subfamily. In terms of assembly, heterodimer of 2 chains generated by proteolytic processing; the large extracellular N-terminal fragment and the membrane-bound C-terminal fragment predominantly remain associated and non-covalently linked. In terms of processing, autoproteolytically processed at the GPS region of the GAIN-B domain; this cleavage modulates receptor activity. As to expression, ubiquitously expressed.

Its subcellular location is the postsynaptic cell membrane. Its activity is regulated as follows. Forms a heterodimer of 2 chains generated by proteolytic processing that remain associated through non-covalent interactions mediated by the GAIN-B domain. In the inactivated receptor, the Stachel sequence (also named stalk) is embedded in the GAIN-B domain, where it adopts a beta-strand conformation. On activation, the Stachel moves into the 7 transmembrane region and adopts a twisted hook-shaped configuration that forms contacts within the receptor, leading to coupling of a G-alpha protein, which activates signaling. The cleaved GAIN-B and N-terminal domains can then dissociate from the rest of the receptor. Orphan adhesion G-protein coupled receptor (aGPCR), which mediates synapse specificity. Ligand binding causes a conformation change that triggers signaling via guanine nucleotide-binding proteins (G proteins) and modulates the activity of downstream effectors. Following G-protein coupled receptor activation, associates with cell adhesion molecules that are expressed at the surface of adjacent cells to direct synapse specificity. Specifically mediates the establishment of perforant-path synapses on CA1-region pyramidal neurons in the hippocampus. Localizes to postsynaptic spines in excitatory synapses in the S.lacunosum-moleculare and interacts with presynaptic cell adhesion molecules, such as teneurins, promoting synapse formation. This Bos taurus (Bovine) protein is Adhesion G protein-coupled receptor L2 (ADGRL2).